The following is a 294-amino-acid chain: Energy-coupling factor transporter ATP-binding protein EcfA1 (294 aa).

An ABC transporter domain is found at 27–260 (IEFENVYFAY…EERLLKMQLD (234 aa)). 60–67 (GHNGSGKS) is an ATP binding site.

This sequence belongs to the ABC transporter superfamily. Energy-coupling factor EcfA family. Forms a stable energy-coupling factor (ECF) transporter complex composed of 2 membrane-embedded substrate-binding proteins (S component), 2 ATP-binding proteins (A component) and 2 transmembrane proteins (T component).

Its subcellular location is the cell membrane. Functionally, ATP-binding (A) component of a common energy-coupling factor (ECF) ABC-transporter complex. Unlike classic ABC transporters this ECF transporter provides the energy necessary to transport a number of different substrates. The chain is Energy-coupling factor transporter ATP-binding protein EcfA1 from Ureaplasma parvum serovar 3 (strain ATCC 700970).